Here is a 737-residue protein sequence, read N- to C-terminus: Catalase-peroxidase (737 aa).

Residues 1 to 23 (MLKKILPVLITLAIVHNTPTAWA) form the signal peptide. A cross-link (tryptophyl-tyrosyl-methioninium (Trp-Tyr) (with M-249)) is located at residues 102–223 (WHGAGTYRIY…LAATQMGLIY (122 aa)). The active-site Proton acceptor is the His103. Residues 223–249 (YVNPEGPNGKPDPVAAAKDIREAFARM) constitute a cross-link (tryptophyl-tyrosyl-methioninium (Tyr-Met) (with W-102)). A heme b-binding site is contributed by His264.

The protein belongs to the peroxidase family. Peroxidase/catalase subfamily. In terms of assembly, homodimer or homotetramer. Heme b serves as cofactor. In terms of processing, formation of the three residue Trp-Tyr-Met cross-link is important for the catalase, but not the peroxidase activity of the enzyme.

The catalysed reaction is H2O2 + AH2 = A + 2 H2O. It carries out the reaction 2 H2O2 = O2 + 2 H2O. In terms of biological role, bifunctional enzyme with both catalase and broad-spectrum peroxidase activity. The chain is Catalase-peroxidase from Yersinia pseudotuberculosis serotype I (strain IP32953).